A 198-amino-acid chain; its full sequence is MTASTTINKGDSPNGDSSASSVLHQKVLGSRRFSNYWWASIVTLGASGFLLAGISSYLKVNLLIVTDPTQLIFVPQGLVMGLYGTAGLLLASYLWLAILWDLGGGYNDFNRETGNIKIFRWGFPGKNRKIEIGSRIQDIQSVRIDIKEGLNPRRALYLRVKGRRDIPLTRVGQPLSLAELETQGAQLARFLGVPLEGL.

Residues 1-20 form a disordered region; the sequence is MTASTTINKGDSPNGDSSAS. Helical transmembrane passes span 38–58 and 78–98; these read WASIVTLGASGFLLAGISSYL and LVMGLYGTAGLLLASYLWLAI.

This sequence belongs to the Ycf4 family.

Its subcellular location is the cellular thylakoid membrane. Seems to be required for the assembly of the photosystem I complex. The polypeptide is Photosystem I assembly protein Ycf4 (Trichormus variabilis (strain ATCC 29413 / PCC 7937) (Anabaena variabilis)).